The chain runs to 258 residues: Type III pantothenate kinase 1 (258 aa).

ATP is bound at residue 6–13; the sequence is DMGNSHIH. 107 to 110 lines the substrate pocket; sequence GADR. Residue Asp-109 is the Proton acceptor of the active site. Asp-130 lines the K(+) pocket. Residue Thr-133 coordinates ATP. A substrate-binding site is contributed by Thr-185.

Belongs to the type III pantothenate kinase family. As to quaternary structure, homodimer. It depends on NH4(+) as a cofactor. K(+) is required as a cofactor.

The protein localises to the cytoplasm. It catalyses the reaction (R)-pantothenate + ATP = (R)-4'-phosphopantothenate + ADP + H(+). It functions in the pathway cofactor biosynthesis; coenzyme A biosynthesis; CoA from (R)-pantothenate: step 1/5. Functionally, catalyzes the phosphorylation of pantothenate (Pan), the first step in CoA biosynthesis. The chain is Type III pantothenate kinase 1 from Francisella tularensis subsp. tularensis (strain FSC 198).